A 602-amino-acid polypeptide reads, in one-letter code: MPAENKKVRFENTTSDKGKIPSKVIKSYYGTMDIKKINEGLLDSKILSAFNTVIALLGSIVIIVMNIMIIQNYTRSTDNQAVIKDALQGIQQQIKGLADKIGTEIGPKVSLIDTSSTITIPANIGLLGSKISQSTASINENVNEKCKFTLPPLKIHECNISCPNPLPFREYRPQTEGVSNLVGLPNNICLQKTSNQILKPKLISYTLPVVGQSGTCITDPLLAMDEGYFAYSHLERIGSCSRGVSKQRIIGVGEVLDRGDEVPSLFMTNVWTPPNPNTVYHCSAVYNNEFYYVLCAVSTVGDPILNSTYWSGSLMMTRLAVKPKSNGGGYNQHQLALRSIEKGRYDKVMPYGPSGIKQGDTLYFPAVGFLVRTEFKYNDSNCPITKCQYSKPENCRLSMGIRPNSHYILRSGLLKYNLSDGENPKVVFIEISDQRLSIGSPSKIYDSLGQPVFYQASFSWDTMIKFGDVLTVNPLVVNWRNNTVISRPGQSQCPRFNTCPEICWEGVYNDAFLIDRINWISAGVFLDSNQTAENPVFTVFKDNEILYRAQLASEDTNAQKTITNCFLLKNKIWCISLVEIYDTGDNVIRPKLFAVKIPEQCT.

At 1 to 49 the chain is on the intravirion side; sequence MPAENKKVRFENTTSDKGKIPSKVIKSYYGTMDIKKINEGLLDSKILSA. A helical membrane pass occupies residues 50 to 70; that stretch reads FNTVIALLGSIVIIVMNIMII. The Virion surface portion of the chain corresponds to 71–602; the sequence is QNYTRSTDNQ…FAVKIPEQCT (532 aa). Residues Asn-72 and Asn-159 are each glycosylated (N-linked (GlcNAc...) asparagine; by host). The stalk stretch occupies residues 96-163; the sequence is GLADKIGTEI…KIHECNISCP (68 aa). Residues 177 to 602 are head; the sequence is GVSNLVGLPN…FAVKIPEQCT (426 aa). 7 cysteine pairs are disulfide-bonded: Cys-189/Cys-601, Cys-216/Cys-240, Cys-282/Cys-295, Cys-382/Cys-395, Cys-387/Cys-499, Cys-493/Cys-503, and Cys-565/Cys-574. 2 N-linked (GlcNAc...) asparagine; by host glycosylation sites follow: Asn-306 and Asn-378. N-linked (GlcNAc...) asparagine; by host glycans are attached at residues Asn-417 and Asn-481. N-linked (GlcNAc...) asparagine; by host glycosylation is present at Asn-529.

This sequence belongs to the paramyxoviruses hemagglutinin-neuraminidase family. Homotetramer; disulfide-linked. Interacts with host EFNB2; this interaction allows the virus entry into the host cell. Interacts with host EFNB3; this interaction allows the virus entry into the host cell. Interacts with the fusion glycoprotein; this interaction involves both head and stalk regions of glygoprotein G. N-glycosylated.

It is found in the virion membrane. It localises to the host cell membrane. Interacts with host ephrinB2/EFNB2 or ephrin B3/EFNB3 to provide virion attachment to target cell. This attachment induces virion internalization predominantly through clathrin-mediated endocytosis. The polypeptide is Glycoprotein G (G) (Cynopterus brachyotis (Lesser short-nosed fruit bat)).